The primary structure comprises 473 residues: Zinc finger and SCAN domain-containing protein 21 (473 aa).

Residue Lys-27 forms a Glycyl lysine isopeptide (Lys-Gly) (interchain with G-Cter in SUMO2) linkage. In terms of domain architecture, SCAN box spans 45–127 (RQRFRQFGYH…TLLEDLEREL (83 aa)). Residues 127-167 (LDEPGHQVSTPPNEQKPVWEKISSSGTAKESPSSMQPQPLE) are disordered. Positions 148–165 (ISSSGTAKESPSSMQPQP) are enriched in polar residues. Residues Lys-221 and Lys-232 each participate in a glycyl lysine isopeptide (Lys-Gly) (interchain with G-Cter in SUMO2) cross-link. The interval 244 to 272 (LENEKGTKPPLQEAGSKKGRESVPTKPTP) is disordered. The segment covering 258-272 (GSKKGRESVPTKPTP) has biased composition (basic and acidic residues). 7 consecutive C2H2-type zinc fingers follow at residues 277 to 299 (YICA…RRTH), 305 to 327 (YVCT…YRTH), 333 to 354 (YDCK…QRMH), 360 to 382 (YQCK…YRIH), 388 to 410 (YQCN…QRLH), 416 to 438 (YKCK…HRIH), and 444 to 466 (YWCH…QRVH). Lys-349 participates in a covalent cross-link: Glycyl lysine isopeptide (Lys-Gly) (interchain with G-Cter in SUMO2).

The protein belongs to the krueppel C2H2-type zinc-finger protein family.

The protein resides in the nucleus. In terms of biological role, strong transcriptional activator. Plays an important role in spermatogenesis; essential for the progression of meiotic prophase I in spermatocytes. In Pan troglodytes (Chimpanzee), this protein is Zinc finger and SCAN domain-containing protein 21 (ZSCAN21).